A 106-amino-acid polypeptide reads, in one-letter code: MIISTTSQLEGRPVAEYLGVVSAESVQGINFVRDFFARFRDFFGGRSQTLESALKEAREQATEELKARARQLQADAVVGVDFEISMPSVQGGMVVVFATGTAVRLK.

This sequence belongs to the UPF0145 family.

This Pseudomonas entomophila (strain L48) protein is UPF0145 protein PSEEN3024.